Here is a 770-residue protein sequence, read N- to C-terminus: DEAD-box ATP-dependent RNA helicase 24 (770 aa).

Positions 1–106 (MSKRPKLGGF…ADSDDEDDPV (106 aa)) are disordered. Residues 14–26 (RPTSYSFERSQPP) show a composition bias toward polar residues. The span at 34–43 (DDPDLDDIAF) shows a compositional bias: acidic residues. The span at 44-55 (SDDAAAPSDAPP) shows a compositional bias: low complexity. Residues 219–247 (KSFADCGFPVQLMNAIAKQGYEKPTTIQC) carry the Q motif motif. A Helicase ATP-binding domain is found at 250–425 (LPIVLSGRDI…REILTDPIRV (176 aa)). 263 to 270 (AKTGSGKT) is an ATP binding site. Positions 373 to 376 (DEAD) match the DEAD box motif. A Helicase C-terminal domain is found at 436–599 (DIKQVVNVLP…DVPNELMDLA (164 aa)). Residues 604-613 (RFRANRDSRK) show a composition bias toward basic and acidic residues. Disordered stretches follow at residues 604 to 640 (RFRA…RGRG), 683 to 704 (VSAS…PSSF), and 729 to 770 (LPAP…GWDR). Residues 621–635 (GKGGGGGGGGGSGAR) show a composition bias toward gly residues. Over residues 683 to 697 (VSASSSNTPSNSAPS) the composition is skewed to low complexity. The span at 744–753 (TVENANPNPE) shows a compositional bias: polar residues. Basic and acidic residues predominate over residues 754 to 770 (SSRDRTRERKRPSGWDR).

This sequence belongs to the DEAD box helicase family.

The enzyme catalyses ATP + H2O = ADP + phosphate + H(+). This chain is DEAD-box ATP-dependent RNA helicase 24, found in Oryza sativa subsp. japonica (Rice).